We begin with the raw amino-acid sequence, 271 residues long: NH(3)-dependent NAD(+) synthetase (271 aa).

43–50 (GISGGQDS) is an ATP binding site. Residue Asp49 coordinates Mg(2+). Arg136 contacts deamido-NAD(+). Residue Thr156 coordinates ATP. Glu161 contributes to the Mg(2+) binding site. Residues Lys169 and Asp176 each coordinate deamido-NAD(+). ATP is bound by residues Lys185 and Thr207. Residue 256–257 (HK) coordinates deamido-NAD(+).

Belongs to the NAD synthetase family. As to quaternary structure, homodimer.

The catalysed reaction is deamido-NAD(+) + NH4(+) + ATP = AMP + diphosphate + NAD(+) + H(+). It participates in cofactor biosynthesis; NAD(+) biosynthesis; NAD(+) from deamido-NAD(+) (ammonia route): step 1/1. In terms of biological role, catalyzes the ATP-dependent amidation of deamido-NAD to form NAD. Uses ammonia as a nitrogen source. The polypeptide is NH(3)-dependent NAD(+) synthetase (Tropheryma whipplei (strain TW08/27) (Whipple's bacillus)).